Here is a 142-residue protein sequence, read N- to C-terminus: Transcriptional regulator MraZ (142 aa).

2 consecutive SpoVT-AbrB domains span residues 5 to 51 (ASSL…PRTE) and 77 to 120 (AMDV…DKAT).

This sequence belongs to the MraZ family. Forms oligomers.

Its subcellular location is the cytoplasm. It localises to the nucleoid. The chain is Transcriptional regulator MraZ from Delftia acidovorans (strain DSM 14801 / SPH-1).